A 380-amino-acid polypeptide reads, in one-letter code: Glycerate kinase (380 aa).

It belongs to the glycerate kinase type-1 family.

The catalysed reaction is (R)-glycerate + ATP = (2R)-3-phosphoglycerate + ADP + H(+). The chain is Glycerate kinase (glxK) from Halalkalibacterium halodurans (strain ATCC BAA-125 / DSM 18197 / FERM 7344 / JCM 9153 / C-125) (Bacillus halodurans).